The chain runs to 472 residues: MPQTPTLVAMFDSSSFHRNLYQSKEESCSELYYQDNNLLSGSLEALIQHLVPNVDYYPDRTYIFTFLLSSRLFIHPSELMARVCHVCMEQQRLNEPGLDKSQVRKIAPKILQLLTEWTETFPYDFRDERMMRNLKDTAHRITNGDEMYRKNVQQIIQNLIRKLASLTQYEELITKINAQSTDRMTVLKTKPQSIQRDIITVCSDPYTVAQQLTHIELERLSYIGPEEFVQAFVQKDPLDNNENCYSDRKKPRNLEAYVEWFNRLSYLVATEICMPVKKKHRARMIEFFIDVARECFNIGNFNSLMAIISGMNMSPVSRLKKTWAKVKTAKFDILEHQMDPSSNFYNYRTALRGAAQRSLTAHSNREKIVIPFCSLLIKDIYFLNEGCTSRLPNGHVNFEKFWELAKQVSEFMTWKQVECPFEKDRKILHYVLTAPIFSEDALYLASYESEGPENHIEKDRWKTLRSALLGRA.

Residues 34–164 (QDNNLLSGSL…IIQNLIRKLA (131 aa)) form the N-terminal Ras-GEF domain. Residues 204-452 (DPYTVAQQLT…YLASYESEGP (249 aa)) form the Ras-GEF domain.

Guanine nucleotide exchange factor (GEF) with specificity for rap2a and other Ras family proteins (in vitro). The polypeptide is Ras-GEF domain-containing family member 1B (rasgef1b) (Xenopus tropicalis (Western clawed frog)).